The chain runs to 842 residues: Leucine--tRNA ligase (842 aa).

The 'HIGH' region motif lies at 44–55; it reads PYPSANGLHVGH. A 'KMSKS' region motif is present at residues 619-623; sequence KMSKS. Lys622 is a binding site for ATP.

This sequence belongs to the class-I aminoacyl-tRNA synthetase family.

It localises to the cytoplasm. The catalysed reaction is tRNA(Leu) + L-leucine + ATP = L-leucyl-tRNA(Leu) + AMP + diphosphate. The chain is Leucine--tRNA ligase from Borrelia recurrentis (strain A1).